The following is a 504-amino-acid chain: MYRCASSRLSSLKARQGNRVLTRFSSSAAVATKPSGGLFSWITGDTSSSVTPLDFPLNDVKLSPPLPDYVEPAKTQITTLANGLKVASEASVNPAASIGLYVDCGSIYETPASYGATHLLERMAFKSTLNRSHLRIVREIEAIGGNVTASASREHMIYTYDALKTYVPQMVEMLADCVRNPAFLDWEVKEQLEKVKAEISEYSKNPQHLLLEAVHSAGYAGPYGNSLMATEATINRLNSTVLEEFVAENYTAPRMVLAASGVEHEEFLKVAEPLLSDLPKVATIEEPKPVYVGGDYRCQADAEMTHFALAFEVPGGWMSEKESMTLTVLQMLMGGGGSFSAGGPGKGMYSRLYLRVLNQYPQIHAFSAFSSIYNNTGLFGIQGTTSSDFGPQAVDVAVKELIAVANPSEVDQVQLNRAKQATKSAILMNLESRMVASEDIGRQLLTYGERNPVEHFLKAIDAVSAKDIASVVQKLISSPLTMASYGDVLSLPSYDAVSSRFRSK.

The protein belongs to the peptidase M16 family. In terms of assembly, heterodimer of alpha and beta subunits, forming the mitochondrial processing protease (MPP) in which subunit alpha is involved in substrate recognition and binding and subunit beta is the catalytic subunit.

It localises to the mitochondrion inner membrane. It catalyses the reaction a quinol + 2 Fe(III)-[cytochrome c](out) = a quinone + 2 Fe(II)-[cytochrome c](out) + 2 H(+)(out). Substrate recognition and binding subunit of the essential mitochondrial processing protease (MPP), which cleaves the mitochondrial sequence off newly imported precursors proteins. In terms of biological role, this is a component of the ubiquinol-cytochrome c reductase complex (complex III or cytochrome b-c1 complex), which is part of the mitochondrial respiratory chain. Mediates formation of the complex between cytochromes c and c1. The chain is Mitochondrial-processing peptidase subunit alpha (MPP) from Solanum tuberosum (Potato).